The primary structure comprises 212 residues: Large ribosomal subunit protein bL25 (212 aa).

The tract at residues 179–212 (EPEEEELPEDDEAAAEGEDAAAGEEAEAPAESED) is disordered.

The protein belongs to the bacterial ribosomal protein bL25 family. CTC subfamily. As to quaternary structure, part of the 50S ribosomal subunit; part of the 5S rRNA/L5/L18/L25 subcomplex. Contacts the 5S rRNA. Binds to the 5S rRNA independently of L5 and L18.

In terms of biological role, this is one of the proteins that binds to the 5S RNA in the ribosome where it forms part of the central protuberance. The polypeptide is Large ribosomal subunit protein bL25 (Corynebacterium urealyticum (strain ATCC 43042 / DSM 7109)).